The sequence spans 295 residues: MSKIPSVNIKELLDAGVHFGHKTSRWNPKMASYIYGERDDVHIIDLRQSVALMSVALNAIYETVKKDGKILFVSTKIQASDIIAEYAEKCGQYYVNHRWLGGMLTNWKTIAGSIEKLNKLDKTLENEEALMGYTKKEILDMSRKKDKLLLSLAGIRNLNSKPDLLVVIDTNKEHIAINEAVKLNVPIVAVVDTNSNPDNVDYPIPGNDDSIRSIRLYCSLFADAALQGLEESMKASGVDMGAMQEHTDKALTSKNVSKLKQAKKFSKTKNIDEETNTEFEQALNDADENKNSDNA.

Positions 263-295 (KKFSKTKNIDEETNTEFEQALNDADENKNSDNA) are disordered.

The protein belongs to the universal ribosomal protein uS2 family.

The sequence is that of Small ribosomal subunit protein uS2 from Rickettsia massiliae (strain Mtu5).